The following is a 37-amino-acid chain: Large ribosomal subunit protein bL36 (37 aa).

This sequence belongs to the bacterial ribosomal protein bL36 family.

This chain is Large ribosomal subunit protein bL36, found in Laribacter hongkongensis (strain HLHK9).